The primary structure comprises 290 residues: GTPase Era (290 aa).

The 143-residue stretch at 2–144 (KVLKVGVLGP…AIILEEFKPQ (143 aa)) folds into the Era-type G domain. A G1 region spans residues 10–17 (GPTNAGKS). Residue 10–17 (GPTNAGKS) participates in GTP binding. Positions 36–40 (NTTLL) are G2. Residues 58–61 (DVPG) are G3. 58–62 (DVPGF) lines the GTP pocket. Residues 97–100 (NKIE) are G4. A G5 region spans residues 121-123 (INK). 122-125 (NKFH) contributes to the GTP binding site. A KH type-2 domain is found at 201-279 (CKNEIPHIAR…FIDIFVKTEK (79 aa)).

It belongs to the TRAFAC class TrmE-Era-EngA-EngB-Septin-like GTPase superfamily. Era GTPase family. As to quaternary structure, monomer.

Its subcellular location is the cytoplasm. It is found in the cell membrane. In terms of biological role, an essential GTPase that binds both GDP and GTP, with rapid nucleotide exchange. Plays a role in 16S rRNA processing and 30S ribosomal subunit biogenesis and possibly also in cell cycle regulation and energy metabolism. The sequence is that of GTPase Era from Mycoplasma genitalium (strain ATCC 33530 / DSM 19775 / NCTC 10195 / G37) (Mycoplasmoides genitalium).